We begin with the raw amino-acid sequence, 434 residues long: Putative magnesium transporter MRS2-D (434 aa).

Disordered regions lie at residues 1–21 (MAAR…AAGE), 126–171 (AASP…DGEA), and 279–311 (EASE…AGGG). A compositionally biased stretch (low complexity) spans 9–21 (AAGAGAPAPAAGE). Residues 279 to 291 (EASELEDHSSRDE) show a composition bias toward basic and acidic residues. Helical transmembrane passes span 367–387 (GILL…TGVF) and 405–425 (FPCA…AALL).

Belongs to the CorA metal ion transporter (MIT) (TC 1.A.35.5) family.

Its subcellular location is the membrane. In terms of biological role, putative magnesium transporter. This chain is Putative magnesium transporter MRS2-D (MRS2-D), found in Oryza sativa subsp. indica (Rice).